The chain runs to 359 residues: Phospho-N-acetylmuramoyl-pentapeptide-transferase (359 aa).

Helical transmembrane passes span 27-47 (IGAA…FIRT), 71-91 (VPTM…LLWA), 93-113 (LDNP…MIGA), 134-154 (LLLQ…HPGY), 170-190 (LGWF…NAVN), 203-223 (MVVS…VVLA), 234-254 (SGEL…FLWF), 262-282 (FMGD…AIII), 286-306 (FLLA…MLQV), and 336-356 (KVVV…IATL).

Belongs to the glycosyltransferase 4 family. MraY subfamily. Requires Mg(2+) as cofactor.

The protein localises to the cell inner membrane. It carries out the reaction UDP-N-acetyl-alpha-D-muramoyl-L-alanyl-gamma-D-glutamyl-meso-2,6-diaminopimeloyl-D-alanyl-D-alanine + di-trans,octa-cis-undecaprenyl phosphate = di-trans,octa-cis-undecaprenyl diphospho-N-acetyl-alpha-D-muramoyl-L-alanyl-D-glutamyl-meso-2,6-diaminopimeloyl-D-alanyl-D-alanine + UMP. The protein operates within cell wall biogenesis; peptidoglycan biosynthesis. Catalyzes the initial step of the lipid cycle reactions in the biosynthesis of the cell wall peptidoglycan: transfers peptidoglycan precursor phospho-MurNAc-pentapeptide from UDP-MurNAc-pentapeptide onto the lipid carrier undecaprenyl phosphate, yielding undecaprenyl-pyrophosphoryl-MurNAc-pentapeptide, known as lipid I. The sequence is that of Phospho-N-acetylmuramoyl-pentapeptide-transferase from Desulfotalea psychrophila (strain LSv54 / DSM 12343).